Reading from the N-terminus, the 183-residue chain is Threonylcarbamoyl-AMP synthase (183 aa).

The YrdC-like domain occupies 1 to 183; that stretch reads MNREQIANAL…LRTNQLFRQG (183 aa).

Belongs to the SUA5 family. TsaC subfamily.

Its subcellular location is the cytoplasm. It carries out the reaction L-threonine + hydrogencarbonate + ATP = L-threonylcarbamoyladenylate + diphosphate + H2O. In terms of biological role, required for the formation of a threonylcarbamoyl group on adenosine at position 37 (t(6)A37) in tRNAs that read codons beginning with adenine. Catalyzes the conversion of L-threonine, HCO(3)(-)/CO(2) and ATP to give threonylcarbamoyl-AMP (TC-AMP) as the acyladenylate intermediate, with the release of diphosphate. The polypeptide is Threonylcarbamoyl-AMP synthase (Haemophilus influenzae (strain PittEE)).